A 316-amino-acid polypeptide reads, in one-letter code: Ribosomal RNA small subunit methyltransferase H (316 aa).

S-adenosyl-L-methionine is bound by residues 35–37 (AGH), aspartate 55, phenylalanine 84, aspartate 105, and glutamine 112.

Belongs to the methyltransferase superfamily. RsmH family.

The protein localises to the cytoplasm. The enzyme catalyses cytidine(1402) in 16S rRNA + S-adenosyl-L-methionine = N(4)-methylcytidine(1402) in 16S rRNA + S-adenosyl-L-homocysteine + H(+). Specifically methylates the N4 position of cytidine in position 1402 (C1402) of 16S rRNA. The chain is Ribosomal RNA small subunit methyltransferase H from Streptococcus sanguinis (strain SK36).